A 142-amino-acid chain; its full sequence is Ribosome-binding factor A (142 aa).

Residues 119 to 142 (EAKQKQHGVETDAEQGETKDEGDK) form a disordered region.

This sequence belongs to the RbfA family. As to quaternary structure, monomer. Binds 30S ribosomal subunits, but not 50S ribosomal subunits or 70S ribosomes.

It is found in the cytoplasm. One of several proteins that assist in the late maturation steps of the functional core of the 30S ribosomal subunit. Associates with free 30S ribosomal subunits (but not with 30S subunits that are part of 70S ribosomes or polysomes). Required for efficient processing of 16S rRNA. May interact with the 5'-terminal helix region of 16S rRNA. This Shewanella halifaxensis (strain HAW-EB4) protein is Ribosome-binding factor A.